The sequence spans 250 residues: Biosynthetic peptidoglycan transglycosylase (250 aa).

A helical transmembrane segment spans residues 15-35; the sequence is AVLLFFVSSLGFVLLYRFVPV.

It belongs to the glycosyltransferase 51 family.

It is found in the cell inner membrane. The enzyme catalyses [GlcNAc-(1-&gt;4)-Mur2Ac(oyl-L-Ala-gamma-D-Glu-L-Lys-D-Ala-D-Ala)](n)-di-trans,octa-cis-undecaprenyl diphosphate + beta-D-GlcNAc-(1-&gt;4)-Mur2Ac(oyl-L-Ala-gamma-D-Glu-L-Lys-D-Ala-D-Ala)-di-trans,octa-cis-undecaprenyl diphosphate = [GlcNAc-(1-&gt;4)-Mur2Ac(oyl-L-Ala-gamma-D-Glu-L-Lys-D-Ala-D-Ala)](n+1)-di-trans,octa-cis-undecaprenyl diphosphate + di-trans,octa-cis-undecaprenyl diphosphate + H(+). The protein operates within cell wall biogenesis; peptidoglycan biosynthesis. Its function is as follows. Peptidoglycan polymerase that catalyzes glycan chain elongation from lipid-linked precursors. This chain is Biosynthetic peptidoglycan transglycosylase, found in Bdellovibrio bacteriovorus (strain ATCC 15356 / DSM 50701 / NCIMB 9529 / HD100).